A 543-amino-acid polypeptide reads, in one-letter code: Adenosine deaminase 2 (543 aa).

Residues 1 to 26 (MFLKFKNIFFIVLTLSIVFNGLIVNS) form the signal peptide. Over residues 31 to 54 (INNKNNNNNNNNKDLSSSESGSSS) the composition is skewed to low complexity. Residues 31–58 (INNKNNNNNNNNKDLSSSESGSSSDINP) are disordered. An N-linked (GlcNAc...) asparagine glycan is attached at Asn126. Residues His144 and His146 each coordinate Zn(2+). N-linked (GlcNAc...) asparagine glycosylation is present at Asn179. 232–239 (WRKFDGIF) provides a ligand contact to substrate. N-linked (GlcNAc...) asparagine glycans are attached at residues Asn309 and Asn326. Gly355 provides a ligand contact to substrate. His389 is a binding site for Zn(2+). The active-site Proton donor is the Glu392. An N-linked (GlcNAc...) asparagine glycan is attached at Asn397. His414 serves as the catalytic Proton acceptor. Asp471 lines the Zn(2+) pocket. Residue Asp472 coordinates substrate. N-linked (GlcNAc...) asparagine glycosylation is found at Asn508 and Asn514.

It belongs to the metallo-dependent hydrolases superfamily. Adenosine and AMP deaminases family. ADGF subfamily. The cofactor is Zn(2+).

Its subcellular location is the secreted. It carries out the reaction adenosine + H2O + H(+) = inosine + NH4(+). Adenosine deaminase that may contribute to the degradation of extracellular adenosine, a signaling molecule that controls a variety of cellular responses. May play a role in the regulation of cell proliferation. This Dictyostelium discoideum (Social amoeba) protein is Adenosine deaminase 2.